Reading from the N-terminus, the 457-residue chain is Pup--protein ligase (457 aa).

E9 is a Mg(2+) binding site. ATP is bound at residue R53. Residue Y55 participates in Mg(2+) binding. The active-site Proton acceptor is the D57. Residue E63 participates in Mg(2+) binding. Positions 66 and 424 each coordinate ATP.

It belongs to the Pup ligase/Pup deamidase family. Pup-conjugating enzyme subfamily.

It catalyses the reaction ATP + [prokaryotic ubiquitin-like protein]-L-glutamate + [protein]-L-lysine = ADP + phosphate + N(6)-([prokaryotic ubiquitin-like protein]-gamma-L-glutamyl)-[protein]-L-lysine.. It functions in the pathway protein degradation; proteasomal Pup-dependent pathway. It participates in protein modification; protein pupylation. Functionally, catalyzes the covalent attachment of the prokaryotic ubiquitin-like protein modifier Pup to the proteasomal substrate proteins, thereby targeting them for proteasomal degradation. This tagging system is termed pupylation. The ligation reaction involves the side-chain carboxylate of the C-terminal glutamate of Pup and the side-chain amino group of a substrate lysine. This is Pup--protein ligase from Xylanimonas cellulosilytica (strain DSM 15894 / JCM 12276 / CECT 5975 / KCTC 9989 / LMG 20990 / NBRC 107835 / XIL07).